We begin with the raw amino-acid sequence, 561 residues long: MAVLLAAVLASSLYLQVAADFDGRWPRQIVSSIGLCRYGGRIDCCWGWARQSWGQCQPVCQPQCKHGECVGPNKCKCHPGFAGKTCNQDLNECGLKPRPCKHRCMNTFGSYKCYCLNGYMLLPDGSCSSALSCSMANCQYGCDVVKGQVRCQCPSPGLQLAPDGRTCVDIDECATGRVSCPRFRQCVNTFGSYICKCHTGFDLMYIGGKYQCHDIDECSLGQHQCSSYARCYNIHGSYKCQCRDGYEGDGLNCVYIPKVMIEPSGPIHMPERNGTISKGDGGHANRIPDAGSTRWPLKTPYIPPVITNRPTSKPTTRPTPNPTPQPTPPPPPPLPTEPRTTPLPPTPERPSTRPTTIAPATSTTTRVITVDNRIQTDPQKPRGDVFIPRQPTNDLFEIFEIERGVSADEEVKDDPGILIHSCNFDHGLCGWIREKDSDLHWETARDPAGGQYLTVSAAKAPGGKAARLVLRLGHLMHSGDLCLSFRHKVTGLHSGTLQVFVRKHGTHGAALWGRNGGHGWRQTQITLRGADVKSVIFKGEKRRGHTGEIGLDDVSLKRGRC.

Positions 1–19 (MAVLLAAVLASSLYLQVAA) are cleaved as a signal peptide. Residues 52-87 (SWGQCQPVCQPQCKHGECVGPNKCKCHPGFAGKTCN) enclose the EGF-like 1 domain. Cystine bridges form between C56–C69, C60–C75, C77–C86, C93–C104, C100–C113, and C115–C127. The region spanning 89 to 128 (DLNECGLKPRPCKHRCMNTFGSYKCYCLNGYMLLPDGSCS) is the EGF-like 2; calcium-binding domain. The EGF-like 3 domain occupies 132–168 (SCSMANCQYGCDVVKGQVRCQCPSPGLQLAPDGRTCV). Residues 169–213 (DIDECATGRVSCPRFRQCVNTFGSYICKCHTGFDLMYIGGKYQCH) form the EGF-like 4; calcium-binding domain. Cystine bridges form between C173–C186, C180–C195, C197–C212, C218–C231, C225–C240, and C242–C253. Positions 214 to 254 (DIDECSLGQHQCSSYARCYNIHGSYKCQCRDGYEGDGLNCV) constitute an EGF-like 5; calcium-binding domain. The segment at 266–370 (PIHMPERNGT…TSTTTRVITV (105 aa)) is disordered. Low complexity predominate over residues 307-316 (TNRPTSKPTT). Residues 317-348 (RPTPNPTPQPTPPPPPPLPTEPRTTPLPPTPE) are compositionally biased toward pro residues. Low complexity predominate over residues 352–366 (TRPTTIAPATSTTTR). The Integrin interaction signature appears at 382–384 (RGD). Residues 420–561 (HSCNFDHGLC…DDVSLKRGRC (142 aa)) form the MAM domain.

Belongs to the nephronectin family. In terms of assembly, homodimer and homotrimer. Expressed in kidney (at protein level).

The protein localises to the secreted. It is found in the extracellular space. It localises to the extracellular matrix. Functionally, functional ligand of integrin alpha-8/beta-1 in kidney development. Regulates the expression of GDNF with integrin alpha-8/beta-1 which is essential for kidney development. May also play a role in the development and function of various tissues, regulating cell adhesion, spreading and survival through the binding of several integrins. This is Nephronectin (Npnt) from Mus musculus (Mouse).